We begin with the raw amino-acid sequence, 156 residues long: Small ribosomal subunit protein uS7 (156 aa).

The protein belongs to the universal ribosomal protein uS7 family. As to quaternary structure, part of the 30S ribosomal subunit. Contacts proteins S9 and S11.

Its function is as follows. One of the primary rRNA binding proteins, it binds directly to 16S rRNA where it nucleates assembly of the head domain of the 30S subunit. Is located at the subunit interface close to the decoding center, probably blocks exit of the E-site tRNA. The chain is Small ribosomal subunit protein uS7 from Anaeromyxobacter sp. (strain Fw109-5).